The primary structure comprises 1082 residues: CRISPR-associated endonuclease Cas9 (1082 aa).

The active-site For RuvC-like nuclease domain is D16. 3 residues coordinate Mg(2+): D16, E504, and E508. In terms of domain architecture, HNH Cas9-type spans 512–667; it reads SFKDRKEIEK…DEDGFKERNL (156 aa). H588 acts as the Proton acceptor for HNH nuclease domain in catalysis. H723 is a Mg(2+) binding site.

Belongs to the CRISPR-associated protein Cas9 family. Subtype II-C subfamily. In terms of assembly, monomer. Binds crRNA and tracrRNA. The cofactor is Mg(2+).

In terms of biological role, CRISPR (clustered regularly interspaced short palindromic repeat) is an adaptive immune system that provides protection against mobile genetic elements (viruses, transposable elements and conjugative plasmids). CRISPR clusters contain spacers, sequences complementary to antecedent mobile elements, and target invading nucleic acids. CRISPR clusters are transcribed and processed into CRISPR RNA (crRNA). In type II CRISPR systems correct processing of pre-crRNA requires a trans-encoded small RNA (tracrRNA), endogenous ribonuclease 3 (rnc) and this protein. The tracrRNA serves as a guide for ribonuclease 3-aided processing of pre-crRNA. Subsequently Cas9/crRNA/tracrRNA endonucleolytically cleaves linear or circular dsDNA target complementary to the spacer; Cas9 is inactive in the absence of the 2 guide RNAs (gRNA). Cas9 recognizes the protospacer adjacent motif (PAM) in the CRISPR repeat sequences to help distinguish self versus nonself, as targets within the bacterial CRISPR locus do not have PAMs. PAM recognition is also required for catalytic activity. Cuts target DNA in Cas9:gRNAs mixing experiments with C.jejuni strain NCTC 11168 and P.multocoda strain Pm70. This chain is CRISPR-associated endonuclease Cas9, found in Neisseria meningitidis serogroup A / serotype 4A (strain DSM 15465 / Z2491).